Here is a 146-residue protein sequence, read N- to C-terminus: Acidic phospholipase A2 C (146 aa).

The signal sequence occupies residues 1 to 21 (MNPAHLLILAAVCVSPLGASS). Positions 22–27 (NRPMPL) are excised as a propeptide. 7 disulfides stabilise this stretch: C38/C98, C53/C145, C55/C71, C70/C126, C77/C119, C87/C112, and C105/C117. Residues Y54, G56, and G58 each coordinate Ca(2+). H74 is an active-site residue. Residue D75 participates in Ca(2+) binding. D120 is an active-site residue.

It belongs to the phospholipase A2 family. Group I subfamily. D49 sub-subfamily. It depends on Ca(2+) as a cofactor. Expressed by the venom gland.

The protein resides in the secreted. The catalysed reaction is a 1,2-diacyl-sn-glycero-3-phosphocholine + H2O = a 1-acyl-sn-glycero-3-phosphocholine + a fatty acid + H(+). Functionally, PLA2 catalyzes the calcium-dependent hydrolysis of the 2-acyl groups in 3-sn-phosphoglycerides. The chain is Acidic phospholipase A2 C from Naja sputatrix (Malayan spitting cobra).